The primary structure comprises 254 residues: 3-dehydroquinate dehydratase (254 aa).

3-dehydroquinate contacts are provided by residues 47 to 49 and arginine 83; that span reads EFR. Residue histidine 144 is the Proton donor/acceptor of the active site. Lysine 171 serves as the catalytic Schiff-base intermediate with substrate. Residues arginine 213, serine 232, and glutamine 236 each contribute to the 3-dehydroquinate site.

Belongs to the type-I 3-dehydroquinase family. Homodimer.

The catalysed reaction is 3-dehydroquinate = 3-dehydroshikimate + H2O. It functions in the pathway metabolic intermediate biosynthesis; chorismate biosynthesis; chorismate from D-erythrose 4-phosphate and phosphoenolpyruvate: step 3/7. Involved in the third step of the chorismate pathway, which leads to the biosynthesis of aromatic amino acids. Catalyzes the cis-dehydration of 3-dehydroquinate (DHQ) and introduces the first double bond of the aromatic ring to yield 3-dehydroshikimate. The protein is 3-dehydroquinate dehydratase of Neisseria meningitidis serogroup A / serotype 4A (strain DSM 15465 / Z2491).